We begin with the raw amino-acid sequence, 350 residues long: 3-dehydroquinate synthase (350 aa).

Residues 106–110 (GVIGD), 130–131 (TS), Lys-143, and Lys-152 contribute to the NAD(+) site. 3 residues coordinate Zn(2+): Glu-185, His-246, and His-263.

This sequence belongs to the sugar phosphate cyclases superfamily. Dehydroquinate synthase family. Co(2+) is required as a cofactor. Zn(2+) serves as cofactor. The cofactor is NAD(+).

The protein localises to the cytoplasm. It catalyses the reaction 7-phospho-2-dehydro-3-deoxy-D-arabino-heptonate = 3-dehydroquinate + phosphate. It participates in metabolic intermediate biosynthesis; chorismate biosynthesis; chorismate from D-erythrose 4-phosphate and phosphoenolpyruvate: step 2/7. In terms of biological role, catalyzes the conversion of 3-deoxy-D-arabino-heptulosonate 7-phosphate (DAHP) to dehydroquinate (DHQ). This chain is 3-dehydroquinate synthase, found in Clostridium beijerinckii (strain ATCC 51743 / NCIMB 8052) (Clostridium acetobutylicum).